The sequence spans 558 residues: 2-isopropylmalate synthase (558 aa).

Residues 30 to 303 enclose the Pyruvate carboxyltransferase domain; it reads PIWCSVDLRD…DPGIDCSDIN (274 aa). Mg(2+)-binding residues include aspartate 39, histidine 242, histidine 244, and asparagine 278. Positions 437 to 558 are regulatory domain; the sequence is QPGARLKFLD…ANRIVGRKAR (122 aa).

The protein belongs to the alpha-IPM synthase/homocitrate synthase family. LeuA type 2 subfamily. As to quaternary structure, homodimer. Mg(2+) serves as cofactor.

It localises to the cytoplasm. It carries out the reaction 3-methyl-2-oxobutanoate + acetyl-CoA + H2O = (2S)-2-isopropylmalate + CoA + H(+). Its pathway is amino-acid biosynthesis; L-leucine biosynthesis; L-leucine from 3-methyl-2-oxobutanoate: step 1/4. Catalyzes the condensation of the acetyl group of acetyl-CoA with 3-methyl-2-oxobutanoate (2-ketoisovalerate) to form 3-carboxy-3-hydroxy-4-methylpentanoate (2-isopropylmalate). The polypeptide is 2-isopropylmalate synthase (Mesorhizobium japonicum (strain LMG 29417 / CECT 9101 / MAFF 303099) (Mesorhizobium loti (strain MAFF 303099))).